A 306-amino-acid chain; its full sequence is Ankyrin repeat domain-containing protein 23 (306 aa).

Positions 41 to 90 (QEAVAREKLKLEEEKRKKLERFNSSRLTLDNLTDLENLVQRRRKKRQRHK) form a coiled coil. The disordered stretch occupies residues 78–107 (LVQRRRKKRQRHKVPPREPESGAEPQPQVP). The segment covering 80 to 91 (QRRRKKRQRHKV) has biased composition (basic residues). ANK repeat units follow at residues 144–173 (LHRTALHWACLKGHRQLVNKLLAAGAAIEV), 177–206 (LDRTPVFWACRGGHLDILKRLLNQGAQVNA), 210–239 (IWSTPLHVAVRMGHSDCLEHLIECGAHINA), and 243–272 (EGDTALHEAVRYGHHKATKLLLLYGAKLGV). The interaction with TTN stretch occupies residues 179-196 (RTPVFWACRGGHLDILKR).

Interacts with titin/TTN and MYPN.

It localises to the nucleus. May be involved in the energy metabolism. Could be a molecular link between myofibrillar stretch-induced signaling pathways and muscle gene expression. This is Ankyrin repeat domain-containing protein 23 (Ankrd23) from Mus musculus (Mouse).